A 343-amino-acid chain; its full sequence is Putative outer membrane protein y4fJ (343 aa).

Residues 1–17 (MRMNFSTVLLGSSVALA) form the signal peptide.

Belongs to the alphaproteobacteria porin family.

It is found in the cell outer membrane. In terms of biological role, may act as an outer membrane pore. The sequence is that of Putative outer membrane protein y4fJ from Sinorhizobium fredii (strain NBRC 101917 / NGR234).